Consider the following 142-residue polypeptide: Large ribosomal subunit protein uL11 (142 aa).

This sequence belongs to the universal ribosomal protein uL11 family. Part of the ribosomal stalk of the 50S ribosomal subunit. Interacts with L10 and the large rRNA to form the base of the stalk. L10 forms an elongated spine to which L12 dimers bind in a sequential fashion forming a multimeric L10(L12)X complex. One or more lysine residues are methylated.

In terms of biological role, forms part of the ribosomal stalk which helps the ribosome interact with GTP-bound translation factors. The polypeptide is Large ribosomal subunit protein uL11 (Histophilus somni (strain 129Pt) (Haemophilus somnus)).